Consider the following 123-residue polypeptide: Small ribosomal subunit protein uS12 (123 aa).

The residue at position 89 (Asp-89) is a 3-methylthioaspartic acid. The interval 104-123 (TAGVKDRKQARSKYGAKRPK) is disordered. The segment covering 113-123 (ARSKYGAKRPK) has biased composition (basic residues).

It belongs to the universal ribosomal protein uS12 family. In terms of assembly, part of the 30S ribosomal subunit. Contacts proteins S8 and S17. May interact with IF1 in the 30S initiation complex.

Functionally, with S4 and S5 plays an important role in translational accuracy. Interacts with and stabilizes bases of the 16S rRNA that are involved in tRNA selection in the A site and with the mRNA backbone. Located at the interface of the 30S and 50S subunits, it traverses the body of the 30S subunit contacting proteins on the other side and probably holding the rRNA structure together. The combined cluster of proteins S8, S12 and S17 appears to hold together the shoulder and platform of the 30S subunit. This is Small ribosomal subunit protein uS12 from Chromobacterium violaceum (strain ATCC 12472 / DSM 30191 / JCM 1249 / CCUG 213 / NBRC 12614 / NCIMB 9131 / NCTC 9757 / MK).